The following is a 648-amino-acid chain: Serine/arginine repetitive matrix protein 3 (648 aa).

Positions 1–44 (MSSTVNNGATGMPAPPDAANGFPQPGASSGSWPRAEEELRAAEP) are disordered. One can recognise a CWF21 domain in the interval 55–98 (LDHERKRRVELKCMELQEMMEEQGYSEEEIRQKVGTFRQMLMEK). Basic and acidic residues predominate over residues 99 to 109 (EGVLTREDRPG). 2 disordered regions span residues 99 to 139 (EGVL…DGPV) and 154 to 648 (YRTK…SGGF). Composition is skewed to basic residues over residues 168-186 (PKKK…KKRR), 199-211 (LRKK…KHRR), and 219-243 (RRKR…RKRP). 2 stretches are compositionally biased toward low complexity: residues 257-276 (SASS…GSPS) and 289-317 (TGSQ…NGGS). Residues 381–409 (ARRRRRRRRRRRSRSSANAPRRRGRRRTK) are compositionally biased toward basic residues. Composition is skewed to low complexity over residues 414-428 (RGSS…SSSD), 461-471 (RPASTSPSPGT), and 493-502 (SWSSSRSPSK). The segment covering 525–544 (LGRDKDSEGRARHAEAEAAR) has biased composition (basic and acidic residues). Basic residues predominate over residues 545-560 (TRRRSRSYSPIRKRRR). The segment covering 579–648 (IPYYRPSPSS…SRSSSESGGF (70 aa)) has biased composition (low complexity).

The protein belongs to the CWC21 family.

In terms of biological role, may play a role in regulating breast cancer cell invasiveness. May be involved in RYBP-mediated breast cancer progression. The protein is Serine/arginine repetitive matrix protein 3 (Srrm3) of Mus musculus (Mouse).